Reading from the N-terminus, the 91-residue chain is Preprofallaxidin-2 (91 aa).

A signal peptide spans 1 to 22 (MASLKKSLFLVLFLGLVSLSIC). A propeptide spanning residues 23 to 49 (EKEKRENEGNENEEEEENHEEGSEEKR) is cleaved from the precursor. A disordered region spans residues 24–49 (KEKRENEGNENEEEEENHEEGSEEKR). Over residues 31 to 41 (GNENEEEEENH) the composition is skewed to acidic residues. Residue leucine 65 is modified to Leucine amide. A propeptide spanning residues 69 to 73 (SEEKR) is cleaved from the precursor. At leucine 89 the chain carries Leucine amide.

The protein belongs to the frog skin active peptide (FSAP) family. Dermaseptin subfamily. As to expression, expressed by the skin glands.

The protein resides in the secreted. In terms of biological role, fallaxidin-3.1 shows antibacterial activity against the Gram-positive bacteria E.faecalis (MIC=100 uM) and L.lactis (MIC=100 uM). No antibacterial activity against the Gram-positive bacteria B.cereus, L.innocua, M.luteus, S.epidermidis, S.uberis and S.aureus, or the Gram-negative bacteria E.cloacae and E.coli. Functionally, fallaxidin-3.2 shows antibacterial activity against the Gram-positive bacteria E.faecalis (MIC=100 uM) and L.lactis (MIC=500 uM). No antibacterial activity against the Gram-positive bacteria B.cereus, L.innocua, M.luteus, S.epidermidis, S.uberis and S.aureus, or the Gram-negative bacteria E.cloacae and E.coli. This chain is Preprofallaxidin-2, found in Litoria fallax (Eastern dwarf tree frog).